Here is a 143-residue protein sequence, read N- to C-terminus: Transcriptional regulator MraZ (143 aa).

SpoVT-AbrB domains lie at 5 to 47 (EYNH…SSDE) and 76 to 119 (ASEC…SNVE).

It belongs to the MraZ family. As to quaternary structure, forms oligomers.

The protein resides in the cytoplasm. It is found in the nucleoid. The protein is Transcriptional regulator MraZ of Alkaliphilus oremlandii (strain OhILAs) (Clostridium oremlandii (strain OhILAs)).